Consider the following 884-residue polypeptide: Alanine--tRNA ligase (884 aa).

The Zn(2+) site is built by His-562, His-566, Cys-676, and His-680.

It belongs to the class-II aminoacyl-tRNA synthetase family. Zn(2+) is required as a cofactor.

The protein localises to the cytoplasm. The enzyme catalyses tRNA(Ala) + L-alanine + ATP = L-alanyl-tRNA(Ala) + AMP + diphosphate. Catalyzes the attachment of alanine to tRNA(Ala) in a two-step reaction: alanine is first activated by ATP to form Ala-AMP and then transferred to the acceptor end of tRNA(Ala). Also edits incorrectly charged Ser-tRNA(Ala) and Gly-tRNA(Ala) via its editing domain. In Jannaschia sp. (strain CCS1), this protein is Alanine--tRNA ligase.